Reading from the N-terminus, the 213-residue chain is DNA-directed RNA polymerase subunit alpha (213 aa).

This sequence belongs to the RNA polymerase alpha chain family. In terms of assembly, in plastids the minimal PEP RNA polymerase catalytic core is composed of four subunits: alpha, beta, beta', and beta''. When a (nuclear-encoded) sigma factor is associated with the core the holoenzyme is formed, which can initiate transcription.

Its subcellular location is the plastid. It is found in the chloroplast. The enzyme catalyses RNA(n) + a ribonucleoside 5'-triphosphate = RNA(n+1) + diphosphate. Its function is as follows. DNA-dependent RNA polymerase catalyzes the transcription of DNA into RNA using the four ribonucleoside triphosphates as substrates. In Euglena stellata, this protein is DNA-directed RNA polymerase subunit alpha (rpoA).